The chain runs to 197 residues: Large ribosomal subunit protein bL9c (197 aa).

The transit peptide at 1–42 (MASSTALSLSWSSSPCWSHSFNGGANETLKVSERRFNFEVVS) directs the protein to the chloroplast.

The protein belongs to the bacterial ribosomal protein bL9 family. Part of the 50S ribosomal subunit.

It is found in the plastid. It localises to the chloroplast. Functionally, binds to the 23S rRNA. The polypeptide is Large ribosomal subunit protein bL9c (RPL9) (Arabidopsis thaliana (Mouse-ear cress)).